Consider the following 145-residue polypeptide: Basic phospholipase A2 BFPA (145 aa).

Residues 1-27 (MNPAHLLVLLAVCVSLLGAANIPPQSL) form the signal peptide. Cystine bridges form between cysteine 38/cysteine 97, cysteine 52/cysteine 144, cysteine 54/cysteine 70, cysteine 69/cysteine 125, cysteine 76/cysteine 118, cysteine 86/cysteine 111, and cysteine 104/cysteine 116. Ca(2+)-binding residues include tyrosine 53, glycine 55, and glycine 57. Histidine 73 is an active-site residue. Ca(2+) is bound at residue aspartate 74. Aspartate 119 is a catalytic residue.

This sequence belongs to the phospholipase A2 family. Group I subfamily. D49 sub-subfamily. Homodimer; disulfide-linked. The cofactor is Ca(2+). Expressed by the venom gland.

The protein localises to the secreted. The enzyme catalyses a 1,2-diacyl-sn-glycero-3-phosphocholine + H2O = a 1-acyl-sn-glycero-3-phosphocholine + a fatty acid + H(+). Snake venom phospholipase A2 (PLA2) that inhibits blood coagulation and shows bactericidal activities against both Gram-negative and -positive bacteria (E.coli, MIC=0.4 uM and S.aureus, MIC=0.1 uM). PLA2 catalyzes the calcium-dependent hydrolysis of the 2-acyl groups in 3-sn-phosphoglycerides. The sequence is that of Basic phospholipase A2 BFPA from Bungarus fasciatus (Banded krait).